Reading from the N-terminus, the 126-residue chain is Histone H2B.5 (126 aa).

The span at 1 to 27 shows a compositional bias: basic and acidic residues; sequence MAPKAEKKPSEKAPKADKKITKEGGSE. The disordered stretch occupies residues 1–34; sequence MAPKAEKKPSEKAPKADKKITKEGGSERKKKTKK. Alanine 2 is subject to N,N,N-trimethylalanine; alternate. Alanine 2 bears the N,N-dimethylalanine; alternate mark. Alanine 2 carries the N-methylalanine; alternate modification. N6-methyllysine is present on lysine 4. 4 positions are modified to N6-acetyllysine: lysine 7, lysine 12, lysine 18, and lysine 19. Lysine 122 participates in a covalent cross-link: Glycyl lysine isopeptide (Lys-Gly) (interchain with G-Cter in ubiquitin).

This sequence belongs to the histone H2B family. The nucleosome is a histone octamer containing two molecules each of H2A, H2B, H3 and H4 assembled in one H3-H4 heterotetramer and two H2A-H2B heterodimers. The octamer wraps approximately 147 bp of DNA. Can be acetylated to form H2BK6ac, H2BK33ac and H2BK34ac. Post-translationally, monoubiquitinated by BRE1 to form H2BK143ub1 and deubiquitinated by UBP26. Required for heterochromatic histone H3 di- and trimethylation at H3K4me. May give a specific tag for epigenetic transcriptional activation.

The protein resides in the nucleus. It localises to the chromosome. Functionally, core component of nucleosome. Nucleosomes wrap and compact DNA into chromatin, limiting DNA accessibility to the cellular machineries which require DNA as a template. Histones thereby play a central role in transcription regulation, DNA repair, DNA replication and chromosomal stability. DNA accessibility is regulated via a complex set of post-translational modifications of histones, also called histone code, and nucleosome remodeling. This chain is Histone H2B.5, found in Arabidopsis thaliana (Mouse-ear cress).